Here is a 395-residue protein sequence, read N- to C-terminus: Imidazolonepropionase (395 aa).

Positions 63 and 65 each coordinate Fe(3+). Positions 63 and 65 each coordinate Zn(2+). Residues Arg72, Tyr135, and His168 each contribute to the 4-imidazolone-5-propanoate site. Tyr135 lines the N-formimidoyl-L-glutamate pocket. Fe(3+) is bound at residue His233. Zn(2+) is bound at residue His233. Position 236 (Gln236) interacts with 4-imidazolone-5-propanoate. Asp308 is a Fe(3+) binding site. Asp308 serves as a coordination point for Zn(2+). N-formimidoyl-L-glutamate-binding residues include Asn310 and Gly312. Thr313 provides a ligand contact to 4-imidazolone-5-propanoate.

The protein belongs to the metallo-dependent hydrolases superfamily. HutI family. Zn(2+) is required as a cofactor. Requires Fe(3+) as cofactor.

It is found in the cytoplasm. The catalysed reaction is 4-imidazolone-5-propanoate + H2O = N-formimidoyl-L-glutamate. It functions in the pathway amino-acid degradation; L-histidine degradation into L-glutamate; N-formimidoyl-L-glutamate from L-histidine: step 3/3. Functionally, catalyzes the hydrolytic cleavage of the carbon-nitrogen bond in imidazolone-5-propanoate to yield N-formimidoyl-L-glutamate. It is the third step in the universal histidine degradation pathway. In Cereibacter sphaeroides (strain ATCC 17023 / DSM 158 / JCM 6121 / CCUG 31486 / LMG 2827 / NBRC 12203 / NCIMB 8253 / ATH 2.4.1.) (Rhodobacter sphaeroides), this protein is Imidazolonepropionase.